The sequence spans 260 residues: 3-methyl-2-oxobutanoate hydroxymethyltransferase (260 aa).

Residues aspartate 44 and aspartate 83 each contribute to the Mg(2+) site. 3-methyl-2-oxobutanoate is bound by residues 44–45 (DS), aspartate 83, and lysine 113. A Mg(2+)-binding site is contributed by glutamate 115. The active-site Proton acceptor is glutamate 182.

The protein belongs to the PanB family. In terms of assembly, homodecamer; pentamer of dimers. The cofactor is Mg(2+).

The protein resides in the cytoplasm. The catalysed reaction is 3-methyl-2-oxobutanoate + (6R)-5,10-methylene-5,6,7,8-tetrahydrofolate + H2O = 2-dehydropantoate + (6S)-5,6,7,8-tetrahydrofolate. It participates in cofactor biosynthesis; (R)-pantothenate biosynthesis; (R)-pantoate from 3-methyl-2-oxobutanoate: step 1/2. Functionally, catalyzes the reversible reaction in which hydroxymethyl group from 5,10-methylenetetrahydrofolate is transferred onto alpha-ketoisovalerate to form ketopantoate. The sequence is that of 3-methyl-2-oxobutanoate hydroxymethyltransferase from Synechocystis sp. (strain ATCC 27184 / PCC 6803 / Kazusa).